The chain runs to 359 residues: Diacyltrehalose acyltransferase Chp2 (359 aa).

The chain crosses the membrane as a helical span at residues 4–24 (VIAGAFAVWLVGWAGGFGTAI). Positions 79–316 (PNAKHDLIDY…VLQPQIDAAY (238 aa)) constitute a PE-PPE domain.

It belongs to the mycobacterial PPE family.

It localises to the cell inner membrane. With respect to regulation, activity is probably potentiated by the DAT/PAT transporter MmpL10. Inhibited by the lipase inhibitor tetrahydrolipstatin (THL). Its function is as follows. Involved in the final steps of polyacyltrehalose (PAT) biosynthesis. Catalyzes the transfer of three mycolipenoyl groups onto diacyltrehalose (DAT) to form PAT. The sequence is that of Diacyltrehalose acyltransferase Chp2 from Mycobacterium tuberculosis (strain ATCC 25618 / H37Rv).